Here is a 158-residue protein sequence, read N- to C-terminus: Small ribosomal subunit protein uS9 (158 aa).

The protein belongs to the universal ribosomal protein uS9 family.

The sequence is that of Small ribosomal subunit protein uS9 from Rhodopseudomonas palustris (strain HaA2).